The chain runs to 296 residues: Fructose-bisphosphate aldolase class 1 (296 aa).

The active-site Proton acceptor is glutamate 175. The active-site Schiff-base intermediate with dihydroxyacetone-P is the lysine 212.

Belongs to the class I fructose-bisphosphate aldolase family.

It catalyses the reaction beta-D-fructose 1,6-bisphosphate = D-glyceraldehyde 3-phosphate + dihydroxyacetone phosphate. Its pathway is carbohydrate degradation; glycolysis; D-glyceraldehyde 3-phosphate and glycerone phosphate from D-glucose: step 4/4. The polypeptide is Fructose-bisphosphate aldolase class 1 (fda) (Staphylococcus epidermidis (strain ATCC 12228 / FDA PCI 1200)).